Reading from the N-terminus, the 463-residue chain is Abscisic acid 8'-hydroxylase 3 (463 aa).

Residues 6 to 26 traverse the membrane as a helical segment; the sequence is LFLTLSAAALFLCLLRFIAGV. C411 contributes to the heme binding site.

This sequence belongs to the cytochrome P450 family. It depends on heme as a cofactor. Mainly expressed in flower buds, flowers, rosette leaves and roots. Lower expression in mature siliques and inflorescence stems. Not expressed in dry seeds.

The protein resides in the membrane. The catalysed reaction is 2-cis-(+)-abscisate + reduced [NADPH--hemoprotein reductase] + O2 = (+)-8'-hydroxyabscisate + oxidized [NADPH--hemoprotein reductase] + H2O + H(+). The protein operates within plant hormone degradation; abscisic acid degradation. Inhibited by tetcyclcis, but not by metyrapone. Functionally, involved in the oxidative degradation of abscisic acid, but not in the isomerization of the produced 8'-hydroxyabscisic acid (8'-OH-ABA) to (-)-phaseic acid (PA). Involved in the control of postgermination growth. The polypeptide is Abscisic acid 8'-hydroxylase 3 (CYP707A3) (Arabidopsis thaliana (Mouse-ear cress)).